The chain runs to 150 residues: Nucleoside diphosphate kinase (150 aa).

ATP is bound by residues Lys-9, Phe-57, Arg-85, Thr-91, Arg-102, and Asn-112. The Pros-phosphohistidine intermediate role is filled by His-115.

The protein belongs to the NDK family. It depends on Mg(2+) as a cofactor.

The protein resides in the cytoplasm. The catalysed reaction is a 2'-deoxyribonucleoside 5'-diphosphate + ATP = a 2'-deoxyribonucleoside 5'-triphosphate + ADP. It catalyses the reaction a ribonucleoside 5'-diphosphate + ATP = a ribonucleoside 5'-triphosphate + ADP. Its function is as follows. Major role in the synthesis of nucleoside triphosphates other than ATP. The ATP gamma phosphate is transferred to the NDP beta phosphate via a ping-pong mechanism, using a phosphorylated active-site intermediate. The chain is Nucleoside diphosphate kinase from Methanothermobacter thermautotrophicus (strain ATCC 29096 / DSM 1053 / JCM 10044 / NBRC 100330 / Delta H) (Methanobacterium thermoautotrophicum).